Consider the following 483-residue polypeptide: 6-phosphogluconate dehydrogenase, decarboxylating (483 aa).

Residues 10–15 and 33–35 each bind NADP(+); these read GLAVMG and NRT. Lys38 is modified (N6-acetyllysine). Ser57 carries the post-translational modification Phosphoserine. The residue at position 59 (Lys59) is an N6-acetyllysine. NADP(+)-binding positions include 75–77 and Asn103; that span reads VKA. Substrate-binding positions include Asn103 and 129-131; that span reads SGG. Ser129 is subject to Phosphoserine. Catalysis depends on Lys184, which acts as the Proton acceptor. Residue 187–188 coordinates substrate; the sequence is HN. Glu191 (proton donor) is an active-site residue. Substrate contacts are provided by Tyr192, Lys261, Arg288, Arg447, and His453. NADP(+) is bound at residue 478-481; the sequence is SSSY.

This sequence belongs to the 6-phosphogluconate dehydrogenase family. As to quaternary structure, homodimer.

The protein resides in the cytoplasm. It catalyses the reaction 6-phospho-D-gluconate + NADP(+) = D-ribulose 5-phosphate + CO2 + NADPH. The protein operates within carbohydrate degradation; pentose phosphate pathway; D-ribulose 5-phosphate from D-glucose 6-phosphate (oxidative stage): step 3/3. Functionally, catalyzes the oxidative decarboxylation of 6-phosphogluconate to ribulose 5-phosphate and CO(2), with concomitant reduction of NADP to NADPH. In Mus musculus (Mouse), this protein is 6-phosphogluconate dehydrogenase, decarboxylating (Pgd).